The sequence spans 458 residues: Cysteine--tRNA ligase (458 aa).

Residue Cys-29 coordinates Zn(2+). The short motif at 31–41 is the 'HIGH' region element; the sequence is MTVYDLCHLGH. 3 residues coordinate Zn(2+): Cys-213, His-238, and Glu-242. Positions 270–274 match the 'KMSKS' region motif; it reads KMSKS. Lys-273 contacts ATP.

The protein belongs to the class-I aminoacyl-tRNA synthetase family. Monomer. Requires Zn(2+) as cofactor.

Its subcellular location is the cytoplasm. It catalyses the reaction tRNA(Cys) + L-cysteine + ATP = L-cysteinyl-tRNA(Cys) + AMP + diphosphate. This chain is Cysteine--tRNA ligase, found in Acidovorax ebreus (strain TPSY) (Diaphorobacter sp. (strain TPSY)).